A 392-amino-acid polypeptide reads, in one-letter code: Dual-specificity RNA methyltransferase RlmN (392 aa).

E115 serves as the catalytic Proton acceptor. The region spanning 121 to 358 (EVDRGTLCIS…YKAGYASPIR (238 aa)) is the Radical SAM core domain. C128 and C369 are disulfide-bonded. [4Fe-4S] cluster contacts are provided by C135, C139, and C142. S-adenosyl-L-methionine-binding positions include 195 to 196 (GE), S227, 249 to 251 (SFH), and N326. Residue C369 is the S-methylcysteine intermediate of the active site.

Belongs to the radical SAM superfamily. RlmN family. Requires [4Fe-4S] cluster as cofactor.

The protein localises to the cytoplasm. It catalyses the reaction adenosine(2503) in 23S rRNA + 2 reduced [2Fe-2S]-[ferredoxin] + 2 S-adenosyl-L-methionine = 2-methyladenosine(2503) in 23S rRNA + 5'-deoxyadenosine + L-methionine + 2 oxidized [2Fe-2S]-[ferredoxin] + S-adenosyl-L-homocysteine. The catalysed reaction is adenosine(37) in tRNA + 2 reduced [2Fe-2S]-[ferredoxin] + 2 S-adenosyl-L-methionine = 2-methyladenosine(37) in tRNA + 5'-deoxyadenosine + L-methionine + 2 oxidized [2Fe-2S]-[ferredoxin] + S-adenosyl-L-homocysteine. Specifically methylates position 2 of adenine 2503 in 23S rRNA and position 2 of adenine 37 in tRNAs. m2A2503 modification seems to play a crucial role in the proofreading step occurring at the peptidyl transferase center and thus would serve to optimize ribosomal fidelity. The sequence is that of Dual-specificity RNA methyltransferase RlmN from Jannaschia sp. (strain CCS1).